Consider the following 309-residue polypeptide: MANLKAIHEQAAHSGEGSRANIRSIWKEFSSVVKIGIVNSNLITTFTGLWLALYFMGEGFLENLHIVFFTLFGSALVIAGSCSINNFIDRDIDQFMERTKTRPTVTGTMEAKRVLWLGIIFITVGTLSLLMTTVTAAIVGLIGAITYIFLYTMWSKRNYTLNTVVGSISGAVPPVIGWTAVDPDFHVVPLVLFLIMFIWQTPHFLALAMKRCEEYRAAGIPMLPVVHGFAMTKRQIVVWVACLLPLPFYLFSLGVPFLTVATLLNVGWLALGLYGFKMKDDLKWAKWMFIYSLNYLTILFVAMVIATLW.

9 consecutive transmembrane segments (helical) span residues 35–55 (IGIV…ALYF), 64–84 (LHIV…SCSI), 114–134 (VLWL…MTTV), 135–155 (TAAI…TMWS), 161–181 (LNTV…WTAV), 187–207 (VVPL…FLAL), 236–256 (IVVW…LGVP), 257–277 (FLTV…YGFK), and 289–309 (FIYS…ATLW).

This sequence belongs to the UbiA prenyltransferase family. Protoheme IX farnesyltransferase subfamily. In terms of assembly, interacts with CtaA.

It is found in the cell membrane. The catalysed reaction is heme b + (2E,6E)-farnesyl diphosphate + H2O = Fe(II)-heme o + diphosphate. It participates in porphyrin-containing compound metabolism; heme O biosynthesis; heme O from protoheme: step 1/1. Its function is as follows. Converts heme B (protoheme IX) to heme O by substitution of the vinyl group on carbon 2 of heme B porphyrin ring with a hydroxyethyl farnesyl side group. This chain is Protoheme IX farnesyltransferase, found in Geobacillus sp. (strain WCH70).